The chain runs to 459 residues: Nucleobindin-1 (459 aa).

A signal peptide spans 1–25; that stretch reads MPTSVPRGAPFLLLPPLLMLSAVLA. The residue at position 85 (Ser-85) is a Phosphoserine. Thr-147 carries the phosphothreonine modification. Residues 149-217 adopt a coiled-coil conformation; the sequence is EARDLELLIQ…QQRRHREHPK (69 aa). Residues 171-217 mediate DNA binding; sequence HHEEFKRYEMLKEHERRRYLESLGEEQRKEAERKLQEQQRRHREHPK. Basic and acidic residues predominate over residues 192–209; sequence SLGEEQRKEAERKLQEQQ. A disordered region spans residues 192 to 220; it reads SLGEEQRKEAERKLQEQQRRHREHPKVNV. The binds to GNAI2 and GNAI3 stretch occupies residues 227-320; the sequence is LKEVWEELDG…VTLEEFLAST (94 aa). 2 EF-hand domains span residues 239-274 and 291-326; these read PNRF…ELEK and ERLR…KEFG. Ca(2+) contacts are provided by Asp-252, Asn-254, Asp-256, Glu-263, Asp-304, Asn-306, Asp-308, and Glu-315. The GBA signature appears at 302–332; that stretch reads NVDTNQDRLVTLEEFLASTQRKEFGETAEGW. Residues 340 to 407 adopt a coiled-coil conformation; sequence AYTEEELKRF…RKQQQQEQSA (68 aa). Ser-368 is subject to Phosphoserine. Residues 393-459 form a disordered region; that stretch reads LQMEQRKQQQ…VLPQLDSQHL (67 aa). A compositionally biased stretch (basic and acidic residues) spans 433–445; the sequence is DQKDVPASEKKVP. Ser-456 carries the post-translational modification Phosphoserine.

It belongs to the nucleobindin family. As to quaternary structure, interacts (via GBA motif) with guanine nucleotide-binding protein G(i) alpha subunits GNAI1, GNAI2 and GNAI3 with higher affinity for GNAI1 and GNAI3 than for GNAI2. Preferentially interacts with inactive rather than active GNAI3. Interaction with GNAI3 is inhibited when NUCB1 binds calcium, probably due to a conformational change which renders the GBA motif inaccessible. Minor constituent of the mineralized matrix of bone. Detected in calvaria, rib cartilage, liver, kidney, spleen, brain, lung, skeletal and heart muscle with highest expression in calvaria and approximately half the amount in kidney, liver and brain.

It localises to the golgi apparatus. It is found in the cis-Golgi network membrane. Its subcellular location is the cytoplasm. The protein resides in the secreted. Functionally, major calcium-binding protein of the Golgi which may have a role in calcium homeostasis. Acts as a non-receptor guanine nucleotide exchange factor which binds to and activates alpha subunits of guanine nucleotide-binding proteins (G proteins). This Rattus norvegicus (Rat) protein is Nucleobindin-1 (Nucb1).